The primary structure comprises 160 residues: Major pollen allergen Bet v 1-F/I (160 aa).

Positions 55, 82, 84, and 101 each coordinate brassinolide.

It belongs to the BetVI family.

The protein localises to the cytoplasm. Functionally, may be a general steroid carrier protein. In Betula pendula (European white birch), this protein is Major pollen allergen Bet v 1-F/I (BETV1F).